A 146-amino-acid chain; its full sequence is Large ribosomal subunit protein uL11 (146 aa).

The protein belongs to the universal ribosomal protein uL11 family. In terms of assembly, part of the ribosomal stalk of the 50S ribosomal subunit. Interacts with L10 and the large rRNA to form the base of the stalk. L10 forms an elongated spine to which L12 dimers bind in a sequential fashion forming a multimeric L10(L12)X complex. In terms of processing, one or more lysine residues are methylated.

In terms of biological role, forms part of the ribosomal stalk which helps the ribosome interact with GTP-bound translation factors. This Blochmanniella floridana protein is Large ribosomal subunit protein uL11.